A 330-amino-acid chain; its full sequence is Phosphate acyltransferase (330 aa).

It belongs to the PlsX family. In terms of assembly, homodimer. Probably interacts with PlsY.

Its subcellular location is the cytoplasm. It catalyses the reaction a fatty acyl-[ACP] + phosphate = an acyl phosphate + holo-[ACP]. The protein operates within lipid metabolism; phospholipid metabolism. In terms of biological role, catalyzes the reversible formation of acyl-phosphate (acyl-PO(4)) from acyl-[acyl-carrier-protein] (acyl-ACP). This enzyme utilizes acyl-ACP as fatty acyl donor, but not acyl-CoA. The polypeptide is Phosphate acyltransferase (Bacillus cereus (strain ATCC 14579 / DSM 31 / CCUG 7414 / JCM 2152 / NBRC 15305 / NCIMB 9373 / NCTC 2599 / NRRL B-3711)).